We begin with the raw amino-acid sequence, 557 residues long: MVSKLTSLQQELLSALLSSGVTKEVLIQALEELLPSPNFGVKLETLPLSPGSGADLDTKPVFHTLTNGHAKGRLSGDEGSEDGDDYDTPPILKELQALNTEEAAEQRAEVDRMLSEDPWRAAKMIKGYMQQHNIPQREVVDVTGLNQSHLSQHLNKGTPMKTQKRAALYTWYVRKQREILRQFNQTVQSSGNMTDKSSQDQLLFLFPEFSQQNQGPGQSEDACSEPTNKKMRRNRFKWGPASQQILYQAYDRQKNPSKEEREALVEECNRAECLQRGVSPSKAHGLGSNLVTEVRVYNWFANRRKEEAFRQKLAMDAYSSNQTHNLNPLLTHGSPHHQPSSSPPNKLSGVRYSQPGNNEVTSSSTISHHGNSAMVTSQSVLQQVSPASLDPGHSLLSPDSKMISVSGGGLPPVSTLTNIHSLSHHNPQQSQNLIMTPLSGVMAIAQSLNTSQAQGVPVINSVASSLAALQPVQFSQQLHSPHQQPLMQQSPGSHMAQQPFMAAVTQLQNSHMYAHKQEPPQYSHTSRFPSAMVVTDTSSINTLTSMSSSKQCPLQAW.

The segment at 1–31 (MVSKLTSLQQELLSALLSSGVTKEVLIQALE) is dimerization. Residues 1-32 (MVSKLTSLQQELLSALLSSGVTKEVLIQALEE) enclose the HNF-p1 domain. Phosphoserine is present on residues serine 49, serine 52, serine 75, and serine 80. Residues 66–85 (TNGHAKGRLSGDEGSEDGDD) are disordered. One can recognise a POU-specific atypical domain in the interval 93–188 (KELQALNTEE…ILRQFNQTVQ (96 aa)). A DNA-binding region (homeobox; HNF1-type) is located at residues 231–311 (MRRNRFKWGP…NRRKEEAFRQ (81 aa)). A disordered region spans residues 324–370 (HNLNPLLTHGSPHHQPSSSPPNKLSGVRYSQPGNNEVTSSSTISHHG). Polar residues predominate over residues 354–370 (QPGNNEVTSSSTISHHG).

The protein belongs to the HNF1 homeobox family. Binds DNA as a dimer. Can form homodimer or heterodimer with HNF1-alpha. Interacts (via HNF-p1 domain) with PCBD1; the interaction increases its transactivation activity. As to expression, liver, kidney and intestine.

The protein resides in the nucleus. In terms of biological role, transcription factor that binds to the inverted palindrome 5'-GTTAATNATTAAC-3'. Binds to the FPC element in the cAMP regulatory unit of the PLAU gene. Transcriptional activity is increased by coactivator PCBD1. The protein is Hepatocyte nuclear factor 1-beta (Hnf1b) of Rattus norvegicus (Rat).